We begin with the raw amino-acid sequence, 980 residues long: MADSDDEYDRKRRDKFRGERDSYRPERRDERRPMGGAANSRDEWSERNPFRGSSAAGGGGGGGGARHRPDYSDYRGSGPRARYGSPGREMPPAKRMRPDWGDSEMRSNPRFGYDPYLVQAWNDHYQSLHSAYSHAGHGPSVRETGPAGGGGVSGDTQTQPAMLTLKQFLDTQDENISDSEVMRKYTEYKTDFKRQQLNEFFVAHKDEEWFKNKYHPEDSVRRSEEQRGFLKRRTEVFLELLENGTIGSVKVDSSQADALVRVLDTCVIKLEGGTDEDLKILDEKPKDPPIVYERKSETTESAVVAKREPESPKTEKDDDLPGASSPQHKSLRPVNLDEENWDEDEPMEVHPQTGKDGEKSDDRRSKEPEDEESVKSDNEKKLKKKKIKKRKRNSSDDDSSSSSSSDSDTESDDEKVKAKYDVEEGLRADQKAEALKDKEEAATAAKEKLLAPESPQPEDVVDPKEALEIKSEASEESKQDKTEQPVGQTERPTTDNPAEKNGEEEGAKAEDKPEAGTQESTANEVTETIDLDKVKDGPHPRALHRTSSIFLRNLAPSITKAEIEAICKRFSGYLRVAIADPLVERRWYRRGWITFTRDVNIKEICWSLNNQRLRDCEMGAIVNRDLSRRVRPANGITAHKQIVRADIKLCAKIAMNLDDRFKLWCDSNRSDAEDAEKKAGQEATNGSGASSSPSYGFNSKNPVLQNITDYLIEEASAEEEELLGLAGDNKDGDGEPIERDESLISVLDRLVLYLRIVHSVDYYNHCEYPYEDEMPNRCGIIHARGPAPMRVTSNDVQEYIKAYDGKLQQFLTKTVQLSDEEIKELGAKNPETEVEKFVQANTQELAKDKWLCPLSGKKFKGPEFIRKHIFNKHEEKVEEVRKEVQYFNNYLRDPKRPQLPEHPGSSKRTESESGRGSGYRPPMYPPFSAMPYGFAPPMMGGGGRGGRNFPPVRREMPLEHQRRIIGYHDLDAPINSDMFD.

Disordered regions lie at residues 1-104 (MADS…GDSE), 133-155 (SHAGHGPSVRETGPAGGGGVSGD), 290-540 (IVYE…GPHP), 675-697 (AEKKAGQEATNGSGASSSPSYGF), and 889-922 (NYLRDPKRPQLPEHPGSSKRTESESGRGSGYRPP). 2 stretches are compositionally biased toward basic and acidic residues: residues 8–33 (YDRKRRDKFRGERDSYRPERRDERRP) and 40–49 (SRDEWSERNP). Gly residues predominate over residues 55–64 (AAGGGGGGGG). Tyrosine 83 carries the post-translational modification Phosphotyrosine. Serine 85 bears the Phosphoserine mark. Basic and acidic residues predominate over residues 305-316 (AKREPESPKTEK). Phosphoserine is present on serine 311. Over residues 336–346 (LDEENWDEDEP) the composition is skewed to acidic residues. The span at 353-380 (TGKDGEKSDDRRSKEPEDEESVKSDNEK) shows a compositional bias: basic and acidic residues. Over residues 381-392 (KLKKKKIKKRKR) the composition is skewed to basic residues. The segment covering 414-450 (EKVKAKYDVEEGLRADQKAEALKDKEEAATAAKEKLL) has biased composition (basic and acidic residues). At serine 454 the chain carries Phosphoserine. Positions 461 to 483 (VDPKEALEIKSEASEESKQDKTE) are enriched in basic and acidic residues. The span at 485–495 (PVGQTERPTTD) shows a compositional bias: polar residues. The segment covering 497-514 (PAEKNGEEEGAKAEDKPE) has biased composition (basic and acidic residues). The segment covering 517-526 (TQESTANEVT) has biased composition (polar residues). The segment covering 530 to 539 (DLDKVKDGPH) has biased composition (basic and acidic residues). Residues 682–697 (EATNGSGASSSPSYGF) are compositionally biased toward polar residues.

The protein belongs to the ARS2 family. As to quaternary structure, interacts with cbp20, Dcr-2 and pasha.

It is found in the nucleus. Acts as a mediator between the cap-binding complex (CBC) and RNA-mediated gene silencing (RNAi). Involved in innate immunity via the short interfering RNAs (siRNAs) processing machinery by restricting the viral RNA production. Also involved microRNA (miRNA)-mediated silencing by contributing to the stability and delivery of primary miRNA transcripts to the primary miRNA processing complex containing drosha and pasha. In Drosophila mojavensis (Fruit fly), this protein is Serrate RNA effector molecule homolog (Ars2).